We begin with the raw amino-acid sequence, 134 residues long: Small ribosomal subunit protein uS11 (134 aa).

The protein belongs to the universal ribosomal protein uS11 family. In terms of assembly, part of the 30S ribosomal subunit. Interacts with proteins S7 and S18. Binds to IF-3.

Functionally, located on the platform of the 30S subunit, it bridges several disparate RNA helices of the 16S rRNA. Forms part of the Shine-Dalgarno cleft in the 70S ribosome. The sequence is that of Small ribosomal subunit protein uS11 from Polaromonas naphthalenivorans (strain CJ2).